The primary structure comprises 265 residues: Shikimate dehydrogenase (NADP(+)) (265 aa).

Residues 15 to 17 (SLS) and Thr62 contribute to the shikimate site. Catalysis depends on Lys66, which acts as the Proton acceptor. NADP(+) is bound at residue Glu78. Asn87 and Asp102 together coordinate shikimate. Residues 126-130 (GAGGV), 150-155 (NRTELK), and Val210 contribute to the NADP(+) site. Tyr212 lines the shikimate pocket. Gly233 contributes to the NADP(+) binding site.

Belongs to the shikimate dehydrogenase family. As to quaternary structure, homodimer.

The catalysed reaction is shikimate + NADP(+) = 3-dehydroshikimate + NADPH + H(+). It functions in the pathway metabolic intermediate biosynthesis; chorismate biosynthesis; chorismate from D-erythrose 4-phosphate and phosphoenolpyruvate: step 4/7. Functionally, involved in the biosynthesis of the chorismate, which leads to the biosynthesis of aromatic amino acids. Catalyzes the reversible NADPH linked reduction of 3-dehydroshikimate (DHSA) to yield shikimate (SA). In Pelagibacter ubique (strain HTCC1062), this protein is Shikimate dehydrogenase (NADP(+)).